The primary structure comprises 131 residues: Peptide methionine sulfoxide reductase MsrB (131 aa).

The MsrB domain maps to 8–130; that stretch reads LDEWRSMLDP…NSVCIDLRPR (123 aa). Zn(2+) contacts are provided by cysteine 47, cysteine 50, cysteine 96, and cysteine 99. Cysteine 119 functions as the Nucleophile in the catalytic mechanism.

The protein belongs to the MsrB Met sulfoxide reductase family. The cofactor is Zn(2+).

It catalyses the reaction L-methionyl-[protein] + [thioredoxin]-disulfide + H2O = L-methionyl-(R)-S-oxide-[protein] + [thioredoxin]-dithiol. This chain is Peptide methionine sulfoxide reductase MsrB, found in Pseudomonas putida (strain GB-1).